The chain runs to 334 residues: MRLLSLLTFSLFAVIGLAPAAQAKDKLTIYTYDSFVSEWGPGPKVKENFEKECDCEVNFVASADGVALLNRLKLEGSKTAADIVLGLDTNLTTEARASGFFAPSGIDQTNVKVPGNFKDDIFVPYDYGYFAVVYDSEKLPNPPKSLKELVEGDPAQKIVLQDPRTATPGLGMLLWMKSVYGDEAGAAWQKLQKRVLTVTPGWSEAYGLFTKGEAPMVLSYTTSPAYHMVVEKTNRYKALAYPEGNYLQIELAAQTTTGAKNPLAKKFLAFMTGPGFQDVIPETNWMFPAGKTSKPLPAAFDALPKPEKTLLIPPYEVAKNRRLWVNEWLAATSR.

The signal sequence occupies residues 1 to 23 (MRLLSLLTFSLFAVIGLAPAAQA). Residues 64–65 (DG), 166–167 (AT), Trp202, and 220–223 (YTTS) contribute to the thiamine site.

Belongs to the bacterial solute-binding protein 1 family. The complex is composed of two ATP-binding proteins (ThiQ), two transmembrane proteins (ThiP) and a solute-binding protein (ThiB).

It is found in the periplasm. In terms of biological role, part of the ABC transporter complex ThiBPQ involved in thiamine import. This is Thiamine-binding periplasmic protein (thiB) from Brucella melitensis biotype 1 (strain ATCC 23456 / CCUG 17765 / NCTC 10094 / 16M).